We begin with the raw amino-acid sequence, 524 residues long: Bifunctional purine biosynthesis protein PurH (524 aa).

In terms of domain architecture, MGS-like spans M1 to V144.

Belongs to the PurH family.

It carries out the reaction (6R)-10-formyltetrahydrofolate + 5-amino-1-(5-phospho-beta-D-ribosyl)imidazole-4-carboxamide = 5-formamido-1-(5-phospho-D-ribosyl)imidazole-4-carboxamide + (6S)-5,6,7,8-tetrahydrofolate. It catalyses the reaction IMP + H2O = 5-formamido-1-(5-phospho-D-ribosyl)imidazole-4-carboxamide. The protein operates within purine metabolism; IMP biosynthesis via de novo pathway; 5-formamido-1-(5-phospho-D-ribosyl)imidazole-4-carboxamide from 5-amino-1-(5-phospho-D-ribosyl)imidazole-4-carboxamide (10-formyl THF route): step 1/1. It functions in the pathway purine metabolism; IMP biosynthesis via de novo pathway; IMP from 5-formamido-1-(5-phospho-D-ribosyl)imidazole-4-carboxamide: step 1/1. In Anaeromyxobacter dehalogenans (strain 2CP-C), this protein is Bifunctional purine biosynthesis protein PurH.